A 496-amino-acid polypeptide reads, in one-letter code: D-2-hydroxyglutarate--pyruvate transhydrogenase DLD3 (496 aa).

Residue K17 forms a Glycyl lysine isopeptide (Lys-Gly) (interchain with G-Cter in ubiquitin) linkage. The FAD-binding PCMH-type domain maps to 64–243 (YRGQSNLILL…TGVSIVAAAK (180 aa)).

Belongs to the FAD-binding oxidoreductase/transferase type 4 family. Requires FAD as cofactor.

Its subcellular location is the cytoplasm. It catalyses the reaction (R)-lactate + 2 Fe(III)-[cytochrome c] = 2 Fe(II)-[cytochrome c] + pyruvate + 2 H(+). The catalysed reaction is (R)-2-hydroxyglutarate + pyruvate = (R)-lactate + 2-oxoglutarate. In terms of biological role, catalyzes the reversible oxidation of (R)-2-hydroxyglutarate to 2-oxoglutarate coupled to reduction of pyruvate to (R)-lactate. Can also use oxaloacetate as electron acceptor instead of pyruvate producing (R)-malate. The protein is D-2-hydroxyglutarate--pyruvate transhydrogenase DLD3 (DLD3) of Saccharomyces cerevisiae (strain ATCC 204508 / S288c) (Baker's yeast).